A 625-amino-acid chain; its full sequence is Glucokinase regulatory protein (625 aa).

SIS domains lie at 90-286 and 320-499; these read VQEV…QGIA and VSTS…LLGK. Residues 109-110, Glu-153, and 179-181 each bind beta-D-fructose 1-phosphate; these read TS and SVG. Beta-D-fructose 6-phosphate is bound at residue 109-110; the sequence is TS. Residue 179–181 participates in beta-D-fructose 6-phosphate binding; it reads SVG. Positions 199–200 are important for interaction with GCK; sequence AV. Residue Glu-348 coordinates beta-D-fructose 1-phosphate. The essential for interaction with GCK stretch occupies residues 463–465; sequence LLF. Residue Lys-514 coordinates beta-D-fructose 1-phosphate. Lys-514 contributes to the beta-D-fructose 6-phosphate binding site.

Belongs to the GCKR family. In terms of assembly, interacts (fructose 6-phosphate bound form) with GCK. As to expression, found in liver and pancreas. Not detected in muscle, brain, heart, thymus, intestine, uterus, adipose tissue, kidney, adrenal, lung or spleen.

The protein localises to the cytoplasm. It localises to the nucleus. Its subcellular location is the mitochondrion. Regulates glucokinase (GCK) by forming an inactive complex with this enzyme. Acts by promoting GCK recruitment to the nucleus, possibly to provide a reserve of GCK that can be quickly released in the cytoplasm after a meal. The affinity of GCKR for GCK is modulated by fructose metabolites: GCKR with bound fructose 6-phosphate has increased affinity for GCK, while GCKR with bound fructose 1-phosphate has strongly decreased affinity for GCK and does not inhibit GCK activity. This Homo sapiens (Human) protein is Glucokinase regulatory protein.